Here is a 107-residue protein sequence, read N- to C-terminus: SH3 domain-binding glutamic acid-rich-like protein 2 (107 aa).

An SH3-binding motif is present at residues 61-67 (QGNPLPP).

It belongs to the SH3BGR family.

The protein resides in the nucleus. The chain is SH3 domain-binding glutamic acid-rich-like protein 2 (SH3BGRL2) from Pongo abelii (Sumatran orangutan).